The sequence spans 395 residues: Multiple organellar RNA editing factor 8, chloroplastic/mitochondrial (395 aa).

Residues 1–56 constitute a chloroplast and mitochondrion transit peptide; that stretch reads MATHTISRSILCRPAKSLSFLFTRSFASSAPLAKSPASSLLSRSRPLVAAFSSVFR. Positions 211-236 are enriched in basic and acidic residues; sequence ANERNRRNDRPRNNDRSRNFERRREN. The interval 211–395 is disordered; that stretch reads ANERNRRNDR…RDGSGNPYQG (185 aa). Residues 240-300 show a composition bias toward pro residues; the sequence is GPPPQRPPMG…GPRHPPPYGA (61 aa). Residues 313 to 334 show a composition bias toward low complexity; the sequence is QNYGGTPPPNYGGAPPANNMGG. The span at 335–355 shows a compositional bias: pro residues; sequence APPPNYGGGPPPQYGAVPPPQ. Residues 356–385 are compositionally biased toward low complexity; the sequence is YGGAPPQNNNYQQQGSGMQQPQYQNNYPPN.

Belongs to the MORF family. In terms of assembly, interacts with protoporphyrinogen oxidase 1 PPOX1. Interacts with PCMP-H52/MEF10. Homodimer and heterodimers with MORF1/RIP8, MORF2/RIP2, MORF3/RIP3, MORF4/RIP4, MORF5/RIP5, MORF6/RIP6 and MORF7/RIP7. Interacts with RBG3/ORRM3. Interacts with PCMP-A2/PMD1. Interacts with ORRM1 and VAT3/OZ1. Interacts with PCMP-H13/MEF35. Interacts with RBG5/ORRM4. Interacts with ORRM6.

Its subcellular location is the mitochondrion. The protein localises to the plastid. It localises to the chloroplast. Involved in organellar RNA editing. Required for the processing of numerous RNA editing sites in mitochondria and plastids. Binds to the plastid RARE1 factor, a pentatricopeptide repeat-containing protein involved in RNA editing. In Arabidopsis thaliana (Mouse-ear cress), this protein is Multiple organellar RNA editing factor 8, chloroplastic/mitochondrial.